The following is a 145-amino-acid chain: Group IID secretory phospholipase A2 (145 aa).

The first 20 residues, 1 to 20 (MELALLCGLVVMAGVIPIQG), serve as a signal peptide directing secretion. Disulfide bonds link Cys46–Cys138, Cys48–Cys64, Cys63–Cys118, Cys69–Cys145, Cys70–Cys111, Cys79–Cys104, and Cys97–Cys109. His47, Gly49, and Gly51 together coordinate Ca(2+). Residue His67 is part of the active site. Asp68 contributes to the Ca(2+) binding site. A glycan (N-linked (GlcNAc...) asparagine) is linked at Asn89. Residue Asp112 is part of the active site.

It belongs to the phospholipase A2 family. It depends on Ca(2+) as a cofactor. Highly expressed in pancreas and spleen and less abundantly in colon, thymus, placenta, small intestine, and prostate.

The protein localises to the secreted. It carries out the reaction a 1,2-diacyl-sn-glycero-3-phosphoethanolamine + H2O = a 1-acyl-sn-glycero-3-phosphoethanolamine + a fatty acid + H(+). It catalyses the reaction 1-hexadecanoyl-2-(9Z-octadecenoyl)-sn-glycero-3-phosphoethanolamine + H2O = 1-hexadecanoyl-sn-glycero-3-phosphoethanolamine + (9Z)-octadecenoate + H(+). The catalysed reaction is 1-hexadecanoyl-2-(9Z,12Z-octadecadienoyl)-sn-glycero-3-phosphoethanolamine + H2O = 1-hexadecanoyl-sn-glycero-3-phosphoethanolamine + (9Z,12Z)-octadecadienoate + H(+). The enzyme catalyses 1,2-dihexadecanoyl-sn-glycero-3-phospho-(1'-sn-glycerol) + H2O = 1-hexadecanoyl-sn-glycero-3-phospho-(1'-sn-glycerol) + hexadecanoate + H(+). It carries out the reaction 1-hexadecanoyl-2-(9Z-octadecenoyl)-sn-glycero-3-phospho-(1'-sn-glycerol) + H2O = 1-hexadecanoyl-sn-glycero-3-phospho-(1'-sn-glycerol) + (9Z)-octadecenoate + H(+). It catalyses the reaction a 1,2-diacyl-sn-glycero-3-phosphocholine + H2O = a 1-acyl-sn-glycero-3-phosphocholine + a fatty acid + H(+). The catalysed reaction is 1,2-dihexadecanoyl-sn-glycero-3-phosphocholine + H2O = 1-hexadecanoyl-sn-glycero-3-phosphocholine + hexadecanoate + H(+). The enzyme catalyses 1-hexadecanoyl-2-(9Z-octadecenoyl)-sn-glycero-3-phosphocholine + H2O = 1-hexadecanoyl-sn-glycero-3-phosphocholine + (9Z)-octadecenoate + H(+). It carries out the reaction 1-hexadecanoyl-2-(9Z,12Z-octadecadienoyl)-sn-glycero-3-phosphocholine + H2O = (9Z,12Z)-octadecadienoate + 1-hexadecanoyl-sn-glycero-3-phosphocholine + H(+). It catalyses the reaction 1-hexadecanoyl-2-(4Z,7Z,10Z,13Z,16Z,19Z-docosahexaenoyl)-sn-glycero-3-phosphocholine + H2O = (4Z,7Z,10Z,13Z,16Z,19Z)-docosahexaenoate + 1-hexadecanoyl-sn-glycero-3-phosphocholine + H(+). In terms of biological role, secretory calcium-dependent phospholipase A2 that primarily targets extracellular lipids, exerting anti-inflammatory and immunosuppressive functions. Hydrolyzes the ester bond of the fatty acyl group attached at sn-2 position of phospholipids (phospholipase A2 activity) with preference for phosphatidylethanolamines and phosphatidylglycerols over phosphatidylcholines. In draining lymph nodes, selectively hydrolyzes diacyl and alkenyl forms of phosphatidylethanolamines, releasing omega-3 polyunsaturated fatty acids (PUFAs) such as eicosapentaenoate and docosahexaenoate that are precursors of the anti-inflammatory lipid mediators, resolvins. During the resolution phase of acute inflammation drives docosahexaenoate-derived resolvin D1 synthesis, which suppresses dendritic cell activation and T-helper 1 immune response. May act in an autocrine and paracrine manner. Via a mechanism independent of its catalytic activity, promotes differentiation of regulatory T cells (Tregs) and participates in the maintenance of immune tolerance. May contribute to lipid remodeling of cellular membranes and generation of lipid mediators involved in pathogen clearance. Displays bactericidal activity against Gram-positive bacteria by directly hydrolyzing phospholipids of the bacterial membrane. This Homo sapiens (Human) protein is Group IID secretory phospholipase A2 (PLA2G2D).